Here is a 331-residue protein sequence, read N- to C-terminus: tRNA (guanine-N(1)-)-methyltransferase (331 aa).

Composition is skewed to low complexity over residues 77–99 (GSDT…QATR) and 107–134 (AQPG…GRAA). Residues 77–137 (GSDTTARSGS…PGAGRAASSR (61 aa)) form a disordered region. Residues Gly169 and 193-198 (LGDYVL) contribute to the S-adenosyl-L-methionine site. Residues 312–331 (WQRCSPAPSEQAPEGARDMA) are disordered.

Belongs to the RNA methyltransferase TrmD family. In terms of assembly, homodimer.

The protein resides in the cytoplasm. It carries out the reaction guanosine(37) in tRNA + S-adenosyl-L-methionine = N(1)-methylguanosine(37) in tRNA + S-adenosyl-L-homocysteine + H(+). Its function is as follows. Specifically methylates guanosine-37 in various tRNAs. The sequence is that of tRNA (guanine-N(1)-)-methyltransferase from Kocuria rhizophila (strain ATCC 9341 / DSM 348 / NBRC 103217 / DC2201).